We begin with the raw amino-acid sequence, 459 residues long: V-type ATP synthase beta chain (459 aa).

The protein belongs to the ATPase alpha/beta chains family.

Its function is as follows. Produces ATP from ADP in the presence of a proton gradient across the membrane. The V-type beta chain is a regulatory subunit. In Thermoanaerobacter sp. (strain X514), this protein is V-type ATP synthase beta chain.